Here is a 269-residue protein sequence, read N- to C-terminus: Protein tio (269 aa).

The span at 1 to 12 (MANEPQEHEEGK) shows a compositional bias: basic and acidic residues. The interval 1 to 127 (MANEPQEHEE…NETKCPDEQN (127 aa)) is disordered. The Cytoplasmic segment spans residues 1 to 246 (MANEPQEHEE…VEKKLTCVIC (246 aa)). A compositionally biased stretch (pro residues) spans 27-41 (PNIPQDPTPGTPPGP). Residues 61–74 (SEGPPDGSGNSSPP) show a composition bias toward low complexity. 2 stretches are compositionally biased toward polar residues: residues 91 to 101 (SESGGNNSAPN) and 114 to 127 (AGNGNETKCPDEQN). Tyrosine 136 carries the post-translational modification Phosphotyrosine; by host LCK. Residues 158–167 (EEERSPFNKY) are CSKH/LBD2. An SH3B/LBD1 region spans residues 186-195 (IPPPQLPPRP). The helical transmembrane segment at 247 to 267 (LLIGILVLLILLFMLGFLFLL) threads the bilayer. Residues 268-269 (MK) lie on the Extracellular side of the membrane.

As to quaternary structure, homodimer. Binds SH3 domain of host LYN, HCK, LCK, SRC, FYN or YES. When tyrosine-phosphorylated, binds to the SH2 domain of host LCK, SRC, or FYN. Post-translationally, phosphorylated by host LCK, SRC and less efficiently by FYN.

The protein resides in the host cell membrane. Functionally, transforms host T-cells, inducing T-cell lymphomia in the host. Activates at least SRC and LCK tyrosines kinases, thereby activating signaling pathway transforming host T-cells. Human T-cells transformed ex vivo display a IL2 indenpendent growth phenotype. This is Protein tio from Ateles (AtHV-3).